The primary structure comprises 241 residues: Adenosylcobinamide-GDP ribazoletransferase (241 aa).

A run of 5 helical transmembrane segments spans residues Ile-24 to Tyr-44, Phe-48 to Phe-68, Val-103 to Ile-123, Val-175 to Ile-195, and Ile-218 to Phe-238.

It belongs to the CobS family. It depends on Mg(2+) as a cofactor.

Its subcellular location is the cell membrane. The catalysed reaction is alpha-ribazole + adenosylcob(III)inamide-GDP = adenosylcob(III)alamin + GMP + H(+). It catalyses the reaction alpha-ribazole 5'-phosphate + adenosylcob(III)inamide-GDP = adenosylcob(III)alamin 5'-phosphate + GMP + H(+). The protein operates within cofactor biosynthesis; adenosylcobalamin biosynthesis; adenosylcobalamin from cob(II)yrinate a,c-diamide: step 7/7. In terms of biological role, joins adenosylcobinamide-GDP and alpha-ribazole to generate adenosylcobalamin (Ado-cobalamin). Also synthesizes adenosylcobalamin 5'-phosphate from adenosylcobinamide-GDP and alpha-ribazole 5'-phosphate. The polypeptide is Adenosylcobinamide-GDP ribazoletransferase (Picrophilus torridus (strain ATCC 700027 / DSM 9790 / JCM 10055 / NBRC 100828 / KAW 2/3)).